We begin with the raw amino-acid sequence, 336 residues long: Isopentenyl-diphosphate delta-isomerase (336 aa).

A substrate-binding site is contributed by 5 to 6 (RK). FMN contacts are provided by residues 60 to 62 (AMT), Ser-90, and Asn-117. Substrate is bound at residue Gln-147. Glu-148 contacts Mg(2+). Residues Lys-179, Ser-204, Thr-209, 253–255 (GVR), and 274–275 (SR) contribute to the FMN site.

This sequence belongs to the IPP isomerase type 2 family. Homooctamer. Dimer of tetramers. FMN serves as cofactor. It depends on NADPH as a cofactor. The cofactor is Mg(2+).

The protein resides in the cytoplasm. It carries out the reaction isopentenyl diphosphate = dimethylallyl diphosphate. In terms of biological role, involved in the biosynthesis of isoprenoids. Catalyzes the 1,3-allylic rearrangement of the homoallylic substrate isopentenyl (IPP) to its allylic isomer, dimethylallyl diphosphate (DMAPP). This is Isopentenyl-diphosphate delta-isomerase from Streptococcus pneumoniae (strain ATCC BAA-255 / R6).